A 179-amino-acid chain; its full sequence is uncharacterized protein (179 aa).

Residues methionine 1–serine 27 constitute a signal peptide (or 24).

This is an uncharacterized protein from Haemophilus influenzae (strain ATCC 51907 / DSM 11121 / KW20 / Rd).